We begin with the raw amino-acid sequence, 492 residues long: Cytoplasmic dynein 1 light intermediate chain 2 (492 aa).

61-68 is a binding site for ATP; the sequence is GEDGSGKT. Disordered regions lie at residues 188–207, 370–423, and 437–492; these read EEGCQGSPQRRGPLTSGSDE, LAKQ…KNNA, and LSKK…ENEA. A phosphoserine mark is found at Ser194, Ser383, and Ser391. Residues 370-383 show a composition bias toward polar residues; that stretch reads LAKQPATPTRTSES. The residue at position 397 (Arg397) is an Omega-N-methylarginine. Polar residues predominate over residues 437–469; sequence LSKKTGSPGSPSAGGVQSTAKKSGQKTVLSNVQ. Thr441 bears the Phosphothreonine mark. Phosphoserine occurs at positions 443 and 446. A compositionally biased stretch (basic and acidic residues) spans 471 to 480; the sequence is ELDRMTRKPD. Over residues 482–492 the composition is skewed to polar residues; the sequence is MVTNSSTENEA.

This sequence belongs to the dynein light intermediate chain family. As to quaternary structure, homodimer. The cytoplasmic dynein 1 complex consists of two catalytic heavy chains (HCs) and a number of non-catalytic subunits presented by intermediate chains (ICs), light intermediate chains (LICs) and light chains (LCs); the composition seems to vary in respect to the IC, LIC and LC composition. The heavy chain homodimer serves as a scaffold for the probable homodimeric assembly of the respective non-catalytic subunits. The ICs and LICs bind directly to the HC dimer and the LCs assemble on the IC dimer. Interacts with DYNC1H1; DYNC1LI1 and DYNC1LI2 bind mutually exclusive to DYNC1H.

The protein resides in the cytoplasm. The protein localises to the cytoskeleton. Acts as one of several non-catalytic accessory components of the cytoplasmic dynein 1 complex that are thought to be involved in linking dynein to cargos and to adapter proteins that regulate dynein function. Cytoplasmic dynein 1 acts as a motor for the intracellular retrograde motility of vesicles and organelles along microtubules. May play a role in binding dynein to membranous organelles or chromosomes. The protein is Cytoplasmic dynein 1 light intermediate chain 2 (Dync1li2) of Mus musculus (Mouse).